We begin with the raw amino-acid sequence, 292 residues long: Expansin-like protein 6 (292 aa).

A signal peptide spans 1 to 24 (MIKIIYLIVLLVLLFKNNHIIIKA). At 25–267 (DDCPFPQIPI…QITSNSNNIL (243 aa)) the chain is on the extracellular side. Residues 47-150 (HASCGFEKLT…IKVPCPTYGN (104 aa)) form the Expansin-like EG45 domain. Intrachain disulfides connect Cys-50/Cys-80 and Cys-83/Cys-145. N-linked (GlcNAc...) asparagine glycosylation occurs at Asn-92. The helical transmembrane segment at 268-288 (PPSLYIIFLISILFLIINNIF) threads the bilayer. The Cytoplasmic portion of the chain corresponds to 289-292 (SNKY).

Belongs to the expansin family. Expansin A subfamily.

It localises to the membrane. Functionally, may serve to lubricate the movement of the cellulose microfibrils during cell growth and wall extension and/or may serve to maintain the fluid state of the slug cell wall. The chain is Expansin-like protein 6 (expl6) from Dictyostelium discoideum (Social amoeba).